The sequence spans 286 residues: Phosphoribosylaminoimidazole-succinocarboxamide synthase (286 aa).

It belongs to the SAICAR synthetase family.

The catalysed reaction is 5-amino-1-(5-phospho-D-ribosyl)imidazole-4-carboxylate + L-aspartate + ATP = (2S)-2-[5-amino-1-(5-phospho-beta-D-ribosyl)imidazole-4-carboxamido]succinate + ADP + phosphate + 2 H(+). The protein operates within purine metabolism; IMP biosynthesis via de novo pathway; 5-amino-1-(5-phospho-D-ribosyl)imidazole-4-carboxamide from 5-amino-1-(5-phospho-D-ribosyl)imidazole-4-carboxylate: step 1/2. This chain is Phosphoribosylaminoimidazole-succinocarboxamide synthase, found in Histophilus somni (strain 2336) (Haemophilus somnus).